The primary structure comprises 72 residues: Translation initiation factor IF-1 (72 aa).

The region spanning 1 to 72 (MSKDDVIEVE…TRGRIIYRHK (72 aa)) is the S1-like domain.

This sequence belongs to the IF-1 family. As to quaternary structure, component of the 30S ribosomal translation pre-initiation complex which assembles on the 30S ribosome in the order IF-2 and IF-3, IF-1 and N-formylmethionyl-tRNA(fMet); mRNA recruitment can occur at any time during PIC assembly.

The protein localises to the cytoplasm. In terms of biological role, one of the essential components for the initiation of protein synthesis. Stabilizes the binding of IF-2 and IF-3 on the 30S subunit to which N-formylmethionyl-tRNA(fMet) subsequently binds. Helps modulate mRNA selection, yielding the 30S pre-initiation complex (PIC). Upon addition of the 50S ribosomal subunit IF-1, IF-2 and IF-3 are released leaving the mature 70S translation initiation complex. In Carboxydothermus hydrogenoformans (strain ATCC BAA-161 / DSM 6008 / Z-2901), this protein is Translation initiation factor IF-1.